The chain runs to 575 residues: MTLFAEIRDTVLAAIDTLVADNVLPSGLEMRAVTVEPPRDASHGDMATNAAMVLAKPAGMKPRDIAEALAAKLADDARIDTVDVAGPGFLNLRLSGDVWRGVIADALTQGEAYGRSKIGAGKRVNVEYVSANPTGPLHVGHTRGAVFGDALASLLDVAGYDVTREYYINDGGAQVDVLVRSVYLRYLEAHGQDVAFEDGTYPGDYLIDVGQALKDKVGDAFVDKGEQFWLAEIREFATEQMMDLIRKDLALLGVEMDVFYSEKSLYGTGRIEAAIDDLRGKGLIYEGYLEPPKGKTPEDWEPREQTLFKSTEHGDDVDRPVMKSDGSWTYFAPDIAYHFDKVSRGFDELIDVFGADHGGYVKRMKAAVSALSGGDVPLDVKLTQLVKLRRGDEELKMSKRAGTFVTLADVVEMVGADVTRFHMLTRKNDAPLDFDVDKVREQSKDNPVWYVQYAHARIKSVLRKAEEAGMSPDPANLNAVNDPAELALAAKIAEYPRLIEIAAKGNEPHRVAFYLFDLASDFHGLWNKGNAETHLRFFQDDDPSATSGKLCLISAVAIVISNGLGILGVTPVDQM.

A 'HIGH' region motif is present at residues 131 to 141 (ANPTGPLHVGH).

This sequence belongs to the class-I aminoacyl-tRNA synthetase family. Monomer.

The protein resides in the cytoplasm. It carries out the reaction tRNA(Arg) + L-arginine + ATP = L-arginyl-tRNA(Arg) + AMP + diphosphate. The protein is Arginine--tRNA ligase of Jannaschia sp. (strain CCS1).